A 371-amino-acid chain; its full sequence is Probable L-aspartate decarboxylase (371 aa).

Residue lysine 232 is modified to N6-(pyridoxal phosphate)lysine.

The protein belongs to the group II decarboxylase family. MfnA subfamily. It depends on pyridoxal 5'-phosphate as a cofactor.

It carries out the reaction L-aspartate + H(+) = beta-alanine + CO2. It participates in cofactor biosynthesis; coenzyme A biosynthesis. Functionally, catalyzes the decarboxylation of L-aspartate to produce beta-alanine. This Pyrococcus furiosus (strain ATCC 43587 / DSM 3638 / JCM 8422 / Vc1) protein is Probable L-aspartate decarboxylase.